Reading from the N-terminus, the 635-residue chain is Probable extracellular metalloproteinase 1 (635 aa).

A signal peptide spans 1–19 (MHGLLLAAGLLSLPLHVLA). A propeptide spanning residues 20-246 (HPQPSTSTSL…VHNVVDYVAH (227 aa)) is cleaved from the precursor. Asn-287 carries an N-linked (GlcNAc...) asparagine glycan. Residue His-430 participates in Zn(2+) binding. The active site involves Glu-431. His-434 contributes to the Zn(2+) binding site. 3 N-linked (GlcNAc...) asparagine glycosylation sites follow: Asn-475, Asn-594, and Asn-623.

This sequence belongs to the peptidase M36 family. The cofactor is Zn(2+).

The protein localises to the secreted. Secreted metalloproteinase probably acting as a virulence factor. The sequence is that of Probable extracellular metalloproteinase 1 (MEP1) from Trichophyton verrucosum (strain HKI 0517).